A 464-amino-acid polypeptide reads, in one-letter code: Siroheme synthase (464 aa).

The segment at 1–203 (MDYLPLFHNL…GQETEAERLL (203 aa)) is precorrin-2 dehydrogenase /sirohydrochlorin ferrochelatase. Residues 22 to 23 (EI) and 43 to 44 (PQ) contribute to the NAD(+) site. Ser128 bears the Phosphoserine mark. The uroporphyrinogen-III C-methyltransferase stretch occupies residues 216-464 (GEVYLVGAGP…AWFEGRQSAD (249 aa)). Pro225 contacts S-adenosyl-L-methionine. Asp248 serves as the catalytic Proton acceptor. Residue Lys270 is the Proton donor of the active site. S-adenosyl-L-methionine contacts are provided by residues 301-303 (GGD), Ile306, 331-332 (TA), Met383, and Gly412.

The protein in the N-terminal section; belongs to the precorrin-2 dehydrogenase / sirohydrochlorin ferrochelatase family. In the C-terminal section; belongs to the precorrin methyltransferase family.

It catalyses the reaction uroporphyrinogen III + 2 S-adenosyl-L-methionine = precorrin-2 + 2 S-adenosyl-L-homocysteine + H(+). The enzyme catalyses precorrin-2 + NAD(+) = sirohydrochlorin + NADH + 2 H(+). It carries out the reaction siroheme + 2 H(+) = sirohydrochlorin + Fe(2+). It participates in cofactor biosynthesis; adenosylcobalamin biosynthesis; precorrin-2 from uroporphyrinogen III: step 1/1. The protein operates within cofactor biosynthesis; adenosylcobalamin biosynthesis; sirohydrochlorin from precorrin-2: step 1/1. Its pathway is porphyrin-containing compound metabolism; siroheme biosynthesis; precorrin-2 from uroporphyrinogen III: step 1/1. It functions in the pathway porphyrin-containing compound metabolism; siroheme biosynthesis; siroheme from sirohydrochlorin: step 1/1. It participates in porphyrin-containing compound metabolism; siroheme biosynthesis; sirohydrochlorin from precorrin-2: step 1/1. In terms of biological role, multifunctional enzyme that catalyzes the SAM-dependent methylations of uroporphyrinogen III at position C-2 and C-7 to form precorrin-2 via precorrin-1. Then it catalyzes the NAD-dependent ring dehydrogenation of precorrin-2 to yield sirohydrochlorin. Finally, it catalyzes the ferrochelation of sirohydrochlorin to yield siroheme. This is Siroheme synthase from Azotobacter vinelandii (strain DJ / ATCC BAA-1303).